The following is a 642-amino-acid chain: Pentatricopeptide repeat-containing protein At3g16010 (642 aa).

14 PPR repeats span residues 125–159, 161–195, 196–230, 232–266, 267–301, 302–336, 337–371, 372–407, 408–442, 443–473, 478–512, 513–547, 548–582, and 583–617; these read DCSTYMTLIRCLEEARLYGEMYRTIQEVVRNTYVS, SPAVLSELVKALGRAKMVSKALSVFYQAKGRKCKP, TSSTYNSVILMLMQEGQHEKVHEVYTEMCNEGDCF, DTITYSALISSYEKLGRNDSAIRLFDEMKDNCMQP, TEKIYTTLLGIYFKVGKVEKALDLFEEMKRAGCSP, TVYTYTELIKGLGKAGRVDEAYGFYKDMLRDGLTP, DVVFLNNLMNILGKVGRVEELTNVFSEMGMWRCTP, TVVSYNTVIKALFESKAHVSEVSSWFDKMKADSVSP, SEFTYSILIDGYCKTNRVEKALLLLEEMDEKGFPP, CPAAYCSLINALGKAKRYEAANELFKELKEN, SSRVYAVMIKHFGKCGKLSEAVDLFNEMKNQGSGP, DVYAYNALMSGMVKAGMINEANSLLRKMEENGCRA, DINSHNIILNGFARTGVPRRAIEMFETIKHSGIKP, and DGVTYNTLLGCFAHAGMFEEAARMMREMKDKGFEY.

This sequence belongs to the PPR family. P subfamily.

The polypeptide is Pentatricopeptide repeat-containing protein At3g16010 (Arabidopsis thaliana (Mouse-ear cress)).